The chain runs to 126 residues: Large ribosomal subunit protein eL8 (126 aa).

This sequence belongs to the eukaryotic ribosomal protein eL8 family. Part of the 50S ribosomal subunit. Probably part of the RNase P complex.

The protein resides in the cytoplasm. In terms of biological role, multifunctional RNA-binding protein that recognizes the K-turn motif in ribosomal RNA, the RNA component of RNase P, box H/ACA, box C/D and box C'/D' sRNAs. The protein is Large ribosomal subunit protein eL8 of Sulfolobus acidocaldarius (strain ATCC 33909 / DSM 639 / JCM 8929 / NBRC 15157 / NCIMB 11770).